A 275-amino-acid chain; its full sequence is MTSTSNLIEQVIEAWQNMQAKTPLVQCITNSVAANYTANVLLASGASPAMIDNPYEAESFTKISSALSINLGTPTSEQMQAMQISAKTAQLNNIPWVLDPVGYGPILAWRSQMTDELLQFKPSVIRGNASEISTLAGNQVQSKGVDSTLSSDQAYQQAYALLAHADCIAISGESDYILSNEIDAVIQVNGGSPLQPKITATGCALGALIAAYSAVATPTIAALSAHVHFAIAGKLAANQAQTMGSFSSIFMDYIHMLDDNLIEQYADIKLLNIQA.

A substrate-binding site is contributed by Met50. Positions 126 and 171 each coordinate ATP. Ala200 lines the substrate pocket.

The protein belongs to the Thz kinase family. It depends on Mg(2+) as a cofactor.

It carries out the reaction 5-(2-hydroxyethyl)-4-methylthiazole + ATP = 4-methyl-5-(2-phosphooxyethyl)-thiazole + ADP + H(+). Its pathway is cofactor biosynthesis; thiamine diphosphate biosynthesis; 4-methyl-5-(2-phosphoethyl)-thiazole from 5-(2-hydroxyethyl)-4-methylthiazole: step 1/1. Functionally, catalyzes the phosphorylation of the hydroxyl group of 4-methyl-5-beta-hydroxyethylthiazole (THZ). In Acinetobacter baumannii (strain ACICU), this protein is Hydroxyethylthiazole kinase.